The primary structure comprises 489 residues: Rhamnulokinase (489 aa).

13–17 (ASSGR) lines the ATP pocket. Cys-68 and Cys-222 are joined by a disulfide. Substrate contacts are provided by residues Gly-83 and 236-238 (HDT). Residue Asp-237 is the Proton acceptor of the active site. Thr-259 serves as a coordination point for ATP. A substrate-binding site is contributed by Asn-296. Gln-304 is an ATP binding site. A disulfide bridge links Cys-353 with Cys-370. Gly-402 contributes to the ATP binding site. Cys-413 and Cys-417 are oxidised to a cystine.

The protein belongs to the rhamnulokinase family. Mg(2+) serves as cofactor.

The catalysed reaction is L-rhamnulose + ATP = L-rhamnulose 1-phosphate + ADP + H(+). Its pathway is carbohydrate degradation; L-rhamnose degradation; glycerone phosphate from L-rhamnose: step 2/3. In terms of biological role, involved in the catabolism of L-rhamnose (6-deoxy-L-mannose). Catalyzes the transfer of the gamma-phosphate group from ATP to the 1-hydroxyl group of L-rhamnulose to yield L-rhamnulose 1-phosphate. The polypeptide is Rhamnulokinase (Salmonella typhi).